The following is a 571-amino-acid chain: UvrABC system protein C (571 aa).

The GIY-YIG domain maps to threonine 15–isoleucine 93. Positions asparagine 184 to leucine 219 constitute a UVR domain.

Belongs to the UvrC family. In terms of assembly, interacts with UvrB in an incision complex.

It localises to the cytoplasm. The UvrABC repair system catalyzes the recognition and processing of DNA lesions. UvrC both incises the 5' and 3' sides of the lesion. The N-terminal half is responsible for the 3' incision and the C-terminal half is responsible for the 5' incision. The protein is UvrABC system protein C of Mycoplasmopsis agalactiae (strain NCTC 10123 / CIP 59.7 / PG2) (Mycoplasma agalactiae).